Here is a 485-residue protein sequence, read N- to C-terminus: Glutamyl-tRNA(Gln) amidotransferase subunit A (485 aa).

Active-site charge relay system residues include Lys-79 and Ser-154. Catalysis depends on Ser-178, which acts as the Acyl-ester intermediate.

Belongs to the amidase family. GatA subfamily. Heterotrimer of A, B and C subunits.

It carries out the reaction L-glutamyl-tRNA(Gln) + L-glutamine + ATP + H2O = L-glutaminyl-tRNA(Gln) + L-glutamate + ADP + phosphate + H(+). Its function is as follows. Allows the formation of correctly charged Gln-tRNA(Gln) through the transamidation of misacylated Glu-tRNA(Gln) in organisms which lack glutaminyl-tRNA synthetase. The reaction takes place in the presence of glutamine and ATP through an activated gamma-phospho-Glu-tRNA(Gln). The polypeptide is Glutamyl-tRNA(Gln) amidotransferase subunit A (Clostridium botulinum (strain Okra / Type B1)).